Here is a 387-residue protein sequence, read N- to C-terminus: ADP,ATP carrier protein 2, mitochondrial (387 aa).

Residues 1 to 77 (MADQANQPTV…PVMPTPLFAN (77 aa)) constitute a mitochondrion transit peptide. Solcar repeat units follow at residues 85–178 (KNFM…FKRL), 190–282 (KWFA…IKPV), and 290–376 (DNFF…LQIL). 5 helical membrane-spanning segments follow: residues 87-114 (FMIDFMMGGVSAAVSKTAAAPIERVKLL), 155-179 (TANVIRYFPTQALNFAFKDYFKRLF), 188-208 (YWKWFAGNLASGGAAGASSLF), 258-279 (FNISCVGIIVYRGLYFGLYDSI), and 293-313 (FASFALGWLITNGAGLASYPI). ADP is bound by residues arginine 160 and lysine 172. Residue arginine 317 participates in ADP binding. An important for transport activity region spans residues 317–322 (RRRMMM). The short motif at 317–322 (RRRMMM) is the Nucleotide carrier signature motif element. The helical transmembrane segment at 353–373 (AGANILRAIAGAGVLSGYDQL) threads the bilayer.

It belongs to the mitochondrial carrier (TC 2.A.29) family. In terms of assembly, monomer.

The protein localises to the mitochondrion inner membrane. It carries out the reaction ADP(in) + ATP(out) = ADP(out) + ATP(in). Its activity is regulated as follows. The matrix-open state (m-state) is inhibited by the membrane-permeable bongkrekic acid (BKA). The cytoplasmic-open state (c-state) is inhibited by the membrane-impermeable toxic inhibitor carboxyatractyloside (CATR). In terms of biological role, ADP:ATP antiporter that mediates import of ADP into the mitochondrial matrix for ATP synthesis, and export of ATP out to fuel the cell. Cycles between the cytoplasmic-open state (c-state) and the matrix-open state (m-state): operates by the alternating access mechanism with a single substrate-binding site intermittently exposed to either the cytosolic (c-state) or matrix (m-state) side of the inner mitochondrial membrane. The chain is ADP,ATP carrier protein 2, mitochondrial (ANT2) from Zea mays (Maize).